The chain runs to 178 residues: MAIKIGITGPVGSIKAEALQKIIGMLQNDGLNVQGVLISKVSDDGKLTGYTIEDILTKKKVQFCDEKFVSRVKIDKLGVDTRLLEEILIPSLQKARESADVIIIDEVGKLENTTKKIHSEIEETLKCGKPLIVTLHKRSRNPVLQEIKSLEGVRVFDITPINKNILPFKVMHVLKGEE.

ATP is bound by residues 9–16 (GPVGSIKA) and 101–108 (VIIIDEVG).

It belongs to the THEP1 NTPase family.

It carries out the reaction a ribonucleoside 5'-triphosphate + H2O = a ribonucleoside 5'-diphosphate + phosphate + H(+). In terms of biological role, has nucleotide phosphatase activity towards ATP, GTP, CTP, TTP and UTP. May hydrolyze nucleoside diphosphates with lower efficiency. The protein is Nucleoside-triphosphatase THEP1 of Thermoplasma volcanium (strain ATCC 51530 / DSM 4299 / JCM 9571 / NBRC 15438 / GSS1).